The sequence spans 167 residues: Large ribosomal subunit protein uL5 (167 aa).

It belongs to the universal ribosomal protein uL5 family. Part of the 50S ribosomal subunit; contacts the 5S rRNA and probably tRNA. Forms a bridge to the 30S subunit in the 70S ribosome.

In terms of biological role, this is one of the proteins that bind and probably mediate the attachment of the 5S RNA into the large ribosomal subunit, where it forms part of the central protuberance. In the 70S ribosome it contacts protein S13 of the 30S subunit (bridge B1b), connecting the 2 subunits; this bridge is implicated in subunit movement. May contact the P site tRNA; the 5S rRNA and some of its associated proteins might help stabilize positioning of ribosome-bound tRNAs. The polypeptide is Large ribosomal subunit protein uL5 (Methanoculleus marisnigri (strain ATCC 35101 / DSM 1498 / JR1)).